The following is a 184-amino-acid chain: Ribosome-recycling factor (184 aa).

This sequence belongs to the RRF family.

It is found in the cytoplasm. In terms of biological role, responsible for the release of ribosomes from messenger RNA at the termination of protein biosynthesis. May increase the efficiency of translation by recycling ribosomes from one round of translation to another. The sequence is that of Ribosome-recycling factor from Staphylococcus carnosus (strain TM300).